We begin with the raw amino-acid sequence, 124 residues long: Small ribosomal subunit protein uS12 (124 aa).

The disordered stretch occupies residues Met1 to Gly32. Asp89 carries the 3-methylthioaspartic acid modification. Residues Thr104–Ser124 are disordered. The segment covering Lys108–Gly118 has biased composition (basic residues).

It belongs to the universal ribosomal protein uS12 family. Part of the 30S ribosomal subunit. Contacts proteins S8 and S17. May interact with IF1 in the 30S initiation complex.

Its function is as follows. With S4 and S5 plays an important role in translational accuracy. Functionally, interacts with and stabilizes bases of the 16S rRNA that are involved in tRNA selection in the A site and with the mRNA backbone. Located at the interface of the 30S and 50S subunits, it traverses the body of the 30S subunit contacting proteins on the other side and probably holding the rRNA structure together. The combined cluster of proteins S8, S12 and S17 appears to hold together the shoulder and platform of the 30S subunit. This chain is Small ribosomal subunit protein uS12, found in Rhodococcus erythropolis (strain PR4 / NBRC 100887).